Here is a 238-residue protein sequence, read N- to C-terminus: Orotidine 5'-phosphate decarboxylase (238 aa).

Substrate-binding positions include aspartate 18, lysine 40, 67–76, threonine 122, arginine 183, glutamine 192, and arginine 213; that span reads DMKLLDIDNT. Catalysis depends on lysine 69, which acts as the Proton donor.

The protein belongs to the OMP decarboxylase family. Type 1 subfamily. As to quaternary structure, homodimer.

The enzyme catalyses orotidine 5'-phosphate + H(+) = UMP + CO2. The protein operates within pyrimidine metabolism; UMP biosynthesis via de novo pathway; UMP from orotate: step 2/2. Catalyzes the decarboxylation of orotidine 5'-monophosphate (OMP) to uridine 5'-monophosphate (UMP). The sequence is that of Orotidine 5'-phosphate decarboxylase from Brucella melitensis biotype 2 (strain ATCC 23457).